The following is a 353-amino-acid chain: Phosphoribosylformylglycinamidine cyclo-ligase (353 aa).

The protein belongs to the AIR synthase family.

The protein resides in the cytoplasm. The catalysed reaction is 2-formamido-N(1)-(5-O-phospho-beta-D-ribosyl)acetamidine + ATP = 5-amino-1-(5-phospho-beta-D-ribosyl)imidazole + ADP + phosphate + H(+). It functions in the pathway purine metabolism; IMP biosynthesis via de novo pathway; 5-amino-1-(5-phospho-D-ribosyl)imidazole from N(2)-formyl-N(1)-(5-phospho-D-ribosyl)glycinamide: step 2/2. The protein is Phosphoribosylformylglycinamidine cyclo-ligase of Ralstonia nicotianae (strain ATCC BAA-1114 / GMI1000) (Ralstonia solanacearum).